Consider the following 429-residue polypeptide: Glutamate-1-semialdehyde 2,1-aminomutase 1 (429 aa).

Lysine 267 bears the N6-(pyridoxal phosphate)lysine mark.

It belongs to the class-III pyridoxal-phosphate-dependent aminotransferase family. HemL subfamily. As to quaternary structure, homodimer. Requires pyridoxal 5'-phosphate as cofactor.

It is found in the cytoplasm. The catalysed reaction is (S)-4-amino-5-oxopentanoate = 5-aminolevulinate. It functions in the pathway porphyrin-containing compound metabolism; protoporphyrin-IX biosynthesis; 5-aminolevulinate from L-glutamyl-tRNA(Glu): step 2/2. The chain is Glutamate-1-semialdehyde 2,1-aminomutase 1 from Staphylococcus carnosus (strain TM300).